Reading from the N-terminus, the 119-residue chain is MIQENKNFATAKAKSIRVSPRKLNLVASFIRNMKVSEALIQLTFSPKRIAKIVKDCLRSAVANAENNLGLDIDRLIITKATVGKSVVMKRIMPRAKGRATRINKFFSNLDITVTEKEDN.

It belongs to the universal ribosomal protein uL22 family. Part of the 50S ribosomal subunit.

In terms of biological role, this protein binds specifically to 23S rRNA; its binding is stimulated by other ribosomal proteins, e.g. L4, L17, and L20. It is important during the early stages of 50S assembly. It makes multiple contacts with different domains of the 23S rRNA in the assembled 50S subunit and ribosome. Functionally, the globular domain of the protein is located near the polypeptide exit tunnel on the outside of the subunit, while an extended beta-hairpin is found that lines the wall of the exit tunnel in the center of the 70S ribosome. The sequence is that of Large ribosomal subunit protein uL22 from Rickettsia typhi (strain ATCC VR-144 / Wilmington).